Reading from the N-terminus, the 554-residue chain is Condensin-2 complex subunit H2 (554 aa).

Phosphoserine is present on residues serine 45, serine 178, serine 182, serine 199, and serine 200. A disordered region spans residues 154 to 296 (PVDVHPMPRS…GQKRKRKGAT (143 aa)). The segment covering 179–191 (RNGSPVSVRSISQ) has biased composition (polar residues). Positions 201-210 (GDEDAEDVAE) are enriched in acidic residues. Phosphoserine is present on serine 441.

It belongs to the CND2 H2 (condensin-2 subunit 2) family. Component of the condensin-2 complex, which contains the SMC2 and SMC4 heterodimer, and three non SMC subunits, NCAPG2, NCAPH2 and NCAPD3 that probably regulate the complex.

The protein resides in the nucleus. Its function is as follows. Regulatory subunit of the condensin-2 complex, a complex that seems to provide chromosomes with an additional level of organization and rigidity and in establishing mitotic chromosome architecture. May promote the resolution of double-strand DNA catenanes (intertwines) between sister chromatids. Condensin-mediated compaction likely increases tension in catenated sister chromatids, providing directionality for type II topoisomerase-mediated strand exchanges toward chromatid decatenation. Required for decatenation of chromatin bridges at anaphase. Early in neurogenesis, may play an essential role to ensure accurate mitotic chromosome condensation in neuron stem cells, ultimately affecting neuron pool and cortex size. Seems to have lineage-specific role in T-cell development. The polypeptide is Condensin-2 complex subunit H2 (Ncaph2) (Rattus norvegicus (Rat)).